Consider the following 292-residue polypeptide: AT-hook motif nuclear-localized protein 23 (292 aa).

Residues 23–100 (HLHHNSSSDD…SKNKPKPPVI (78 aa)) form a disordered region. The span at 60-79 (SGGGSGSSGGGGGHGGGGDV) shows a compositional bias: gly residues. The a.T hook DNA-binding region spans 82 to 94 (RRPRGRPPGSKNK). One can recognise a PPC domain in the interval 106-242 (ANTLRAHILE…EDEQQQQLGG (137 aa)).

Its subcellular location is the nucleus. Functionally, transcription factor that specifically binds AT-rich DNA sequences related to the nuclear matrix attachment regions (MARs). The sequence is that of AT-hook motif nuclear-localized protein 23 from Arabidopsis thaliana (Mouse-ear cress).